Consider the following 291-residue polypeptide: MIVLATSEGVKLGRRLAEELDAELAPVEEDRFPDGEQIVRVPPELDGTVVVVHSMSPPQDENLVKAIITLDAARENGAEEVIAIVPYMAYSRQDRRFEPGEPVSFRAVARAVSANADALITVDLHEPGTLKYFDVPAENVSAAEELGKYLAERFEGEDLVVIGPDEGARELAREVASICGVEYDHLEKKRLSGDEVEIHPKELDVEGRTVVLVDDMIDTGGTMVEAARALRDQGAGTLYAACTHALLTRNAATRLLASGFEDIIATDTVPNPFEKVSVAPPVAEAVENLSG.

ATP contacts are provided by residues 34–36 (DGE) and 92–93 (RQ). The Mg(2+) site is built by His125 and Asp165. Lys188 is an active-site residue. Positions 190 and 214 each coordinate D-ribose 5-phosphate.

This sequence belongs to the ribose-phosphate pyrophosphokinase family. Class III (archaeal) subfamily. Mg(2+) is required as a cofactor.

The protein resides in the cytoplasm. It catalyses the reaction D-ribose 5-phosphate + ATP = 5-phospho-alpha-D-ribose 1-diphosphate + AMP + H(+). It functions in the pathway metabolic intermediate biosynthesis; 5-phospho-alpha-D-ribose 1-diphosphate biosynthesis; 5-phospho-alpha-D-ribose 1-diphosphate from D-ribose 5-phosphate (route I): step 1/1. In terms of biological role, involved in the biosynthesis of the central metabolite phospho-alpha-D-ribosyl-1-pyrophosphate (PRPP) via the transfer of pyrophosphoryl group from ATP to 1-hydroxyl of ribose-5-phosphate (Rib-5-P). The polypeptide is Ribose-phosphate pyrophosphokinase (Methanopyrus kandleri (strain AV19 / DSM 6324 / JCM 9639 / NBRC 100938)).